We begin with the raw amino-acid sequence, 472 residues long: Adenosylhomocysteinase (472 aa).

3 residues coordinate substrate: Thr-61, Asp-136, and Glu-196. 197–199 (TTT) contacts NAD(+). Lys-226 and Asp-230 together coordinate substrate. Residues Asn-231, 260-265 (GYGDVG), Glu-283, Asn-318, 339-341 (IGH), and Asn-384 each bind NAD(+).

It belongs to the adenosylhomocysteinase family. It depends on NAD(+) as a cofactor.

The protein localises to the cytoplasm. It catalyses the reaction S-adenosyl-L-homocysteine + H2O = L-homocysteine + adenosine. Its pathway is amino-acid biosynthesis; L-homocysteine biosynthesis; L-homocysteine from S-adenosyl-L-homocysteine: step 1/1. Functionally, may play a key role in the regulation of the intracellular concentration of adenosylhomocysteine. This chain is Adenosylhomocysteinase, found in Cupriavidus necator (strain ATCC 17699 / DSM 428 / KCTC 22496 / NCIMB 10442 / H16 / Stanier 337) (Ralstonia eutropha).